The sequence spans 582 residues: External alternative NAD(P)H-ubiquinone oxidoreductase B4, mitochondrial (582 aa).

A mitochondrion-targeting transit peptide spans 1–39; that stretch reads MSFHSFYQRASSLFKAYPSTSKILLLSTFSGGGGVLVYS. 65-95 is a binding site for FAD; that stretch reads KVVVLGSGWSGYSFLSYLNNPNYDVQVVSPR. 227-263 is a binding site for NAD(+); it reads LHFVVVGGGPTGVEFSAELHDFLVQDVAKIYPKVQEF. One can recognise an EF-hand domain in the interval 384–419; the sequence is RVMEDIAAIFNKADKGNTGTLKKKDFNSVVKDICQR. Ca(2+) contacts are provided by Asp397, Thr401, Thr403, and Asp408. A Microbody targeting signal motif is present at residues 573 to 582; sequence FVFGRDSSSI.

This sequence belongs to the NADH dehydrogenase family. FAD is required as a cofactor. Expressed in seedlings, roots, cotyledons, stems, buds and flowers and, to a lower extent, in stems and leaves.

It is found in the mitochondrion inner membrane. The protein localises to the peroxisome. The catalysed reaction is a quinone + NADH + H(+) = a quinol + NAD(+). It catalyses the reaction a ubiquinone + NADH + H(+) = a ubiquinol + NAD(+). Its activity is regulated as follows. No effect of calcium ions on activity. Alternative NADH-ubiquinone oxidoreductase which catalyzes the oxidation of mitochondrial NADH does not translocate protons across the inner mitochondrial membrane. NAD(P)H dehydrogenase; more efficient on NADH. This Arabidopsis thaliana (Mouse-ear cress) protein is External alternative NAD(P)H-ubiquinone oxidoreductase B4, mitochondrial (NDB4).